Consider the following 955-residue polypeptide: Kinesin-like protein NACK2 (955 aa).

The Kinesin motor domain maps to 36–357 (KILVTIRVRP…LCFATSAKEV (322 aa)). Residue 120–127 (GQTSSGKT) coordinates ATP. Coiled coils occupy residues 366–443 (VVAE…LKGS) and 566–604 (KASL…VMHL).

It belongs to the TRAFAC class myosin-kinesin ATPase superfamily. Kinesin family. KIN-7 subfamily.

The protein resides in the cytoplasm. It localises to the nucleus. It is found in the cytoskeleton. The protein localises to the phragmoplast. Its function is as follows. Probable plus end-directed motor protein that may function in the NACK-PQR (NPK1-NQK1/MEK1-NRK1) MAP kinase signaling pathway, which is essential for somatic cell cytokinesis, especially for the cell-plate formation and its expansion. May regulate the activity and the localization of NPK1, probably by association through the non-catalytic region of the kinase. This chain is Kinesin-like protein NACK2 (NACK2), found in Nicotiana tabacum (Common tobacco).